The sequence spans 468 residues: Meiotically up-regulated gene 111 protein (468 aa).

12 helical membrane passes run 13-33, 59-79, 92-112, 116-136, 158-178, 190-210, 285-305, 330-350, 356-376, 382-402, 417-437, and 446-466; these read LVLI…NSVT, IVSA…VPFY, VFTT…SILY, FPTC…ISGT, IVVL…LGSI, LISW…AVFF, PIPI…FFDI, FGSL…GFSV, TMLI…FATA, LALF…LVAA, ALLE…AFIV, and FFIG…LLLG.

The protein resides in the membrane. Functionally, has a role in meiosis. This chain is Meiotically up-regulated gene 111 protein (mug111), found in Schizosaccharomyces pombe (strain 972 / ATCC 24843) (Fission yeast).